The following is a 100-amino-acid chain: UPF0235 protein NE0395 (100 aa).

Belongs to the UPF0235 family.

In Nitrosomonas europaea (strain ATCC 19718 / CIP 103999 / KCTC 2705 / NBRC 14298), this protein is UPF0235 protein NE0395.